A 960-amino-acid chain; its full sequence is Valine--tRNA ligase (960 aa).

Positions 42–52 match the 'HIGH' region motif; it reads PNITGNLHMGH. A 'KMSKS' region motif is present at residues 553 to 557; it reads KMSKS. An ATP-binding site is contributed by Lys556. A coiled-coil region spans residues 879-950; that stretch reads VLKAIDKEIE…LSQQLESLHD (72 aa).

It belongs to the class-I aminoacyl-tRNA synthetase family. ValS type 1 subfamily. In terms of assembly, monomer.

Its subcellular location is the cytoplasm. The catalysed reaction is tRNA(Val) + L-valine + ATP = L-valyl-tRNA(Val) + AMP + diphosphate. Its function is as follows. Catalyzes the attachment of valine to tRNA(Val). As ValRS can inadvertently accommodate and process structurally similar amino acids such as threonine, to avoid such errors, it has a 'posttransfer' editing activity that hydrolyzes mischarged Thr-tRNA(Val) in a tRNA-dependent manner. This Buchnera aphidicola subsp. Schizaphis graminum (strain Sg) protein is Valine--tRNA ligase.